Consider the following 325-residue polypeptide: ATP synthase subunit gamma, mitochondrial (325 aa).

Residues 1-42 (MAMAVFRREGRRLLPSIAARPIAAIRSPLSSDQEEGLLGVRS) constitute a mitochondrion transit peptide.

This sequence belongs to the ATPase gamma chain family. F-type ATPases have 2 components, CF(1) - the catalytic core - and CF(0) - the membrane proton channel. CF(1) has five subunits: alpha(3), beta(3), gamma(1), delta(1), epsilon(1). CF(0) has three main subunits: a, b and c.

The protein resides in the mitochondrion. Its subcellular location is the mitochondrion inner membrane. Mitochondrial membrane ATP synthase (F(1)F(0) ATP synthase or Complex V) produces ATP from ADP in the presence of a proton gradient across the membrane which is generated by electron transport complexes of the respiratory chain. F-type ATPases consist of two structural domains, F(1) - containing the extramembraneous catalytic core, and F(0) - containing the membrane proton channel, linked together by a central stalk and a peripheral stalk. During catalysis, ATP synthesis in the catalytic domain of F(1) is coupled via a rotary mechanism of the central stalk subunits to proton translocation. Part of the complex F(1) domain and the central stalk which is part of the complex rotary element. The gamma subunit protrudes into the catalytic domain formed of alpha(3)beta(3). Rotation of the central stalk against the surrounding alpha(3)beta(3) subunits leads to hydrolysis of ATP in three separate catalytic sites on the beta subunits. This chain is ATP synthase subunit gamma, mitochondrial (ATPC), found in Arabidopsis thaliana (Mouse-ear cress).